Reading from the N-terminus, the 212-residue chain is 2,3-bisphosphoglycerate-dependent phosphoglycerate mutase (212 aa).

Residues 9-16, 22-23, Arg61, 88-91, Lys99, 115-116, and 159-160 contribute to the substrate site; these read RHGQSEWN, TG, ERDY, RR, and GN. The Tele-phosphohistidine intermediate role is filled by His10. The Proton donor/acceptor role is filled by Glu88.

Belongs to the phosphoglycerate mutase family. BPG-dependent PGAM subfamily. As to quaternary structure, homodimer.

The catalysed reaction is (2R)-2-phosphoglycerate = (2R)-3-phosphoglycerate. It functions in the pathway carbohydrate degradation; glycolysis; pyruvate from D-glyceraldehyde 3-phosphate: step 3/5. Its function is as follows. Catalyzes the interconversion of 2-phosphoglycerate and 3-phosphoglycerate. The protein is 2,3-bisphosphoglycerate-dependent phosphoglycerate mutase of Methylobacterium radiotolerans (strain ATCC 27329 / DSM 1819 / JCM 2831 / NBRC 15690 / NCIMB 10815 / 0-1).